The sequence spans 176 residues: NADH-quinone oxidoreductase subunit I (176 aa).

4Fe-4S ferredoxin-type domains lie at 47 to 77 and 87 to 116; these read LTRD…MQAA and AWFR…MTSE. The [4Fe-4S] cluster site is built by cysteine 57, cysteine 60, cysteine 63, cysteine 67, cysteine 96, cysteine 99, cysteine 102, and cysteine 106.

Belongs to the complex I 23 kDa subunit family. As to quaternary structure, NDH-1 is composed of 14 different subunits. Subunits NuoA, H, J, K, L, M, N constitute the membrane sector of the complex. It depends on [4Fe-4S] cluster as a cofactor.

Its subcellular location is the cell inner membrane. It carries out the reaction a quinone + NADH + 5 H(+)(in) = a quinol + NAD(+) + 4 H(+)(out). Functionally, NDH-1 shuttles electrons from NADH, via FMN and iron-sulfur (Fe-S) centers, to quinones in the respiratory chain. The immediate electron acceptor for the enzyme in this species is believed to be ubiquinone. Couples the redox reaction to proton translocation (for every two electrons transferred, four hydrogen ions are translocated across the cytoplasmic membrane), and thus conserves the redox energy in a proton gradient. In Syntrophotalea carbinolica (strain DSM 2380 / NBRC 103641 / GraBd1) (Pelobacter carbinolicus), this protein is NADH-quinone oxidoreductase subunit I.